We begin with the raw amino-acid sequence, 303 residues long: Protoheme IX farnesyltransferase (303 aa).

6 consecutive transmembrane segments (helical) span residues 25–45 (MGLVQGNLIPAFAGAWLAIVM), 54–74 (IPQILLMLVGSTLIMGGACAL), 118–138 (CLFLLNIPSGVLGLIGIVGYV), 166–186 (IGWVAIDGSLSLAAVALFLVV), 230–250 (LVLLLPLPFLLSNLGVTFVVI), and 280–300 (FVYSLNYLVVFFALVVVVSLI).

Belongs to the UbiA prenyltransferase family. Protoheme IX farnesyltransferase subfamily. Interacts with CtaA.

The protein resides in the cell membrane. It catalyses the reaction heme b + (2E,6E)-farnesyl diphosphate + H2O = Fe(II)-heme o + diphosphate. It functions in the pathway porphyrin-containing compound metabolism; heme O biosynthesis; heme O from protoheme: step 1/1. Functionally, converts heme B (protoheme IX) to heme O by substitution of the vinyl group on carbon 2 of heme B porphyrin ring with a hydroxyethyl farnesyl side group. The sequence is that of Protoheme IX farnesyltransferase from Staphylococcus epidermidis (strain ATCC 12228 / FDA PCI 1200).